A 316-amino-acid polypeptide reads, in one-letter code: Exonuclease DPD1, chloroplastic/mitochondrial (316 aa).

The transit peptide at 1–63 (MCISISQVSR…NVSTTTQGSR (63 aa)) directs the protein to the chloroplast and mitochondrion. The region spanning 112–282 (IVSDLETTGL…SDVLLLSKVF (171 aa)) is the Exonuclease domain. Mg(2+)-binding residues include Asp-115 and Glu-117. His-269 functions as the Proton donor/acceptor in the catalytic mechanism. Asp-274 serves as a coordination point for Mg(2+).

The protein belongs to the exonuclease superfamily. TREX family. It depends on Mg(2+) as a cofactor. As to expression, highly expressed in mature pollen grains. Detected in flowers, senescing leaves and roots.

The protein resides in the plastid. Its subcellular location is the chloroplast. It localises to the mitochondrion. With respect to regulation, inhibited by free nucleotide diphosphates (NDPs). Its function is as follows. Exonuclease required for organelle DNA degradation during pollen development. Plays non-essential roles in maternal inheritance. May be part of the DNA salvage machinery. The polypeptide is Exonuclease DPD1, chloroplastic/mitochondrial (Arabidopsis thaliana (Mouse-ear cress)).